Consider the following 145-residue polypeptide: uncharacterized protein (145 aa).

The helical transmembrane segment at 97–117 (ISMLLLIVIIAIGLTISYMVI) threads the bilayer.

The protein localises to the membrane. This is an uncharacterized protein from Methanocaldococcus jannaschii (strain ATCC 43067 / DSM 2661 / JAL-1 / JCM 10045 / NBRC 100440) (Methanococcus jannaschii).